Reading from the N-terminus, the 222-residue chain is Pyridoxal phosphate homeostasis protein (222 aa).

N6-(pyridoxal phosphate)lysine is present on Lys35.

The protein belongs to the pyridoxal phosphate-binding protein YggS/PROSC family.

Its function is as follows. Pyridoxal 5'-phosphate (PLP)-binding protein, which is involved in PLP homeostasis. In Helicobacter pylori (strain ATCC 700392 / 26695) (Campylobacter pylori), this protein is Pyridoxal phosphate homeostasis protein.